Reading from the N-terminus, the 358-residue chain is Probable branched-chain-amino-acid aminotransferase (358 aa).

Position 196 is an N6-(pyridoxal phosphate)lysine (K196).

It belongs to the class-IV pyridoxal-phosphate-dependent aminotransferase family. Pyridoxal 5'-phosphate serves as cofactor.

It carries out the reaction L-leucine + 2-oxoglutarate = 4-methyl-2-oxopentanoate + L-glutamate. The enzyme catalyses L-isoleucine + 2-oxoglutarate = (S)-3-methyl-2-oxopentanoate + L-glutamate. The catalysed reaction is L-valine + 2-oxoglutarate = 3-methyl-2-oxobutanoate + L-glutamate. It functions in the pathway amino-acid biosynthesis; L-isoleucine biosynthesis; L-isoleucine from 2-oxobutanoate: step 4/4. It participates in amino-acid biosynthesis; L-leucine biosynthesis; L-leucine from 3-methyl-2-oxobutanoate: step 4/4. Its pathway is amino-acid biosynthesis; L-valine biosynthesis; L-valine from pyruvate: step 4/4. Its function is as follows. Acts on leucine, isoleucine and valine. The protein is Probable branched-chain-amino-acid aminotransferase (ilvE) of Staphylococcus aureus (strain MRSA252).